The sequence spans 478 residues: Pathogenicity cluster 5 protein d (478 aa).

Positions 1-19 (MQIQNLIAALAGMAVVAEA) are cleaved as a signal peptide. Disordered regions lie at residues 35–89 (RQNK…GQAN) and 299–400 (NGGK…GGKG). Positions 38–64 (KGGNNNNNNNNNNNNNNNNNKNNGGNN) are enriched in low complexity. A compositionally biased stretch (polar residues) spans 65-89 (QLCLNPNNVQKGSQQAGTPKQGQAN). A compositionally biased stretch (gly residues) spans 316 to 326 (NNDGGGGGNDG). 2 stretches are compositionally biased toward low complexity: residues 327 to 348 (GNNS…QNGA) and 379 to 393 (TQAG…TNGN). Residues N328 and N332 are each glycosylated (N-linked (GlcNAc...) asparagine).

The protein localises to the secreted. Its function is as follows. Secreted protein required for appressorial penetration of intact host epidermal cells and for pathogenicit, but not for subsequent biotrophic and necrotrophic colonization of leaves. The polypeptide is Pathogenicity cluster 5 protein d (Colletotrichum graminicola (strain M1.001 / M2 / FGSC 10212) (Maize anthracnose fungus)).